We begin with the raw amino-acid sequence, 99 residues long: Duplicate procyclin (99 aa).

The chain is Duplicate procyclin from Trypanosoma brucei brucei.